The following is a 908-amino-acid chain: Metabotropic glutamate receptor 8 (908 aa).

The signal sequence occupies residues 1 to 33; the sequence is MVCEGKRSTSCPCFFLLTAKFYWILTMMQRTHS. The Extracellular segment spans residues 34–583; sequence QEYAHSIRLD…IIKLEWHSPW (550 aa). Cys64 and Cys106 are disulfide-bonded. The N-linked (GlcNAc...) asparagine glycan is linked to Asn95. L-glutamate is bound by residues Ser156, 177–179, and Tyr227; that span reads AST. 7 cysteine pairs are disulfide-bonded: Cys246–Cys534, Cys369–Cys384, Cys424–Cys431, Cys516–Cys535, Cys520–Cys538, Cys541–Cys553, and Cys556–Cys569. Residue Asn298 is glycosylated (N-linked (GlcNAc...) asparagine). Position 309 (Asp309) interacts with L-glutamate. Lys401 contacts L-glutamate. N-linked (GlcNAc...) asparagine glycans are attached at residues Asn452 and Asn480. A glycan (N-linked (GlcNAc...) asparagine) is linked at Asn565. A helical transmembrane segment spans residues 584-608; the sequence is AVVPVFIAILGIIATTFVIVTFVRY. The Cytoplasmic portion of the chain corresponds to 609–620; that stretch reads NDTPIVRASGRE. A helical transmembrane segment spans residues 621-641; it reads LSYVLLTGIFLCYSITFLMIA. The Extracellular segment spans residues 642–647; the sequence is APDTII. The chain crosses the membrane as a helical span at residues 648 to 668; that stretch reads CSFRRIFLGLGMCFSYAALLT. The Cytoplasmic segment spans residues 669–695; that stretch reads KTNRIHRIFEQGKKSVTAPKFISPASQ. Residues 696–716 traverse the membrane as a helical segment; sequence LVITFSLISVQLLGVFVWFVV. Residues 717–746 are Extracellular-facing; the sequence is DPPHTIIDYGEQRTLDPENARGVLKCDISD. Residues 747–768 form a helical membrane-spanning segment; that stretch reads LSLICSLGYSILLMVTCTVYAI. At 769-781 the chain is on the cytoplasmic side; sequence KTRGVPETFNEAK. The chain crosses the membrane as a helical span at residues 782-803; that stretch reads PIGFTMYTTCIIWLAFIPIFFG. Over 804-818 the chain is Extracellular; sequence TAQSAEKMYIQTTTL. A helical transmembrane segment spans residues 819-843; it reads TVSMSLSASVSLGMLYMPKVYIIIF. Residues 844–908 are Cytoplasmic-facing; the sequence is HPEQNVQKRK…TYISYSNHSI (65 aa). Lys882 participates in a covalent cross-link: Glycyl lysine isopeptide (Lys-Gly) (interchain with G-Cter in SUMO1).

The protein belongs to the G-protein coupled receptor 3 family. In terms of assembly, interacts with PICK1. As to expression, strongly expressed in olfactory bulb, accessory olfactory bulb, and mammillary body. Weaker expression in the retina, and in scattered cells in the cortex and hindbrain.

It localises to the cell membrane. Its function is as follows. G-protein coupled receptor for glutamate. Ligand binding causes a conformation change that triggers signaling via guanine nucleotide-binding proteins (G proteins) and modulates the activity of down-stream effectors. Signaling inhibits adenylate cyclase activity. This Mus musculus (Mouse) protein is Metabotropic glutamate receptor 8 (Grm8).